Here is a 158-residue protein sequence, read N- to C-terminus: Cyclic pyranopterin monophosphate synthase (158 aa).

Substrate-binding positions include 73–75 (LCH) and 110–111 (ME). The active site involves Asp125.

It belongs to the MoaC family. As to quaternary structure, homohexamer; trimer of dimers.

It catalyses the reaction (8S)-3',8-cyclo-7,8-dihydroguanosine 5'-triphosphate = cyclic pyranopterin phosphate + diphosphate. It participates in cofactor biosynthesis; molybdopterin biosynthesis. In terms of biological role, catalyzes the conversion of (8S)-3',8-cyclo-7,8-dihydroguanosine 5'-triphosphate to cyclic pyranopterin monophosphate (cPMP). The sequence is that of Cyclic pyranopterin monophosphate synthase from Azotobacter vinelandii (strain DJ / ATCC BAA-1303).